The sequence spans 522 residues: Monogalactosyldiacylglycerol synthase, chloroplastic (522 aa).

A chloroplast-targeting transit peptide spans 1 to 98; that stretch reads MSHPSTVTSE…RIPLGFSSIG (98 aa).

It belongs to the glycosyltransferase 28 family. In terms of assembly, homodimer. Requires Zn(2+) as cofactor.

It is found in the plastid. The protein localises to the chloroplast inner membrane. It catalyses the reaction a 1,2-diacyl-sn-glycerol + UDP-alpha-D-galactose = a 1,2-diacyl-3-O-(beta-D-galactosyl)-sn-glycerol + UDP + H(+). Inhibited by ortho-phenanthroline and UDP (competitive inhibitor relatively to UDP-Gal only) and inactivated by citraconic anhydride, tert-butoxycarbonyl-L-methionine hydrosuccinimidyl ester (SLR) and N-ethylmaleimide (NEM). Functionally, involved in the synthesis of the major structural component of photosynthetic membranes. The 1,2-diacylglycerol substrate preference is 18:2/18:2 &gt; 18:0/18:1 &gt; 18:1/18:1 &gt; 18:1/16:0 &gt; 16:0/18:2 &gt; 18:3/18:3 &gt; 16:0/18:1 &gt; 16:0/16:0 &gt; 18:0/18:0. The polypeptide is Monogalactosyldiacylglycerol synthase, chloroplastic (MGD A) (Spinacia oleracea (Spinach)).